We begin with the raw amino-acid sequence, 491 residues long: Ketol-acid reductoisomerase (NADP(+)) (491 aa).

The KARI N-terminal Rossmann domain occupies 15–208 (AQLGKCRFMG…GGHRAGVLES (194 aa)). NADP(+) is bound by residues 45 to 48 (CGAQ), Arg68, Arg76, Ser78, and 108 to 110 (DKQ). His132 is a catalytic residue. Gly158 lines the NADP(+) pocket. KARI C-terminal knotted domains are found at residues 209 to 344 (SFVA…TAPQ) and 345 to 484 (YEGK…MTDM). Residues Asp217, Glu221, Glu389, and Glu393 each contribute to the Mg(2+) site. A substrate-binding site is contributed by Ser414.

The protein belongs to the ketol-acid reductoisomerase family. The cofactor is Mg(2+).

The catalysed reaction is (2R)-2,3-dihydroxy-3-methylbutanoate + NADP(+) = (2S)-2-acetolactate + NADPH + H(+). It carries out the reaction (2R,3R)-2,3-dihydroxy-3-methylpentanoate + NADP(+) = (S)-2-ethyl-2-hydroxy-3-oxobutanoate + NADPH + H(+). The protein operates within amino-acid biosynthesis; L-isoleucine biosynthesis; L-isoleucine from 2-oxobutanoate: step 2/4. It participates in amino-acid biosynthesis; L-valine biosynthesis; L-valine from pyruvate: step 2/4. Its function is as follows. Involved in the biosynthesis of branched-chain amino acids (BCAA). Catalyzes an alkyl-migration followed by a ketol-acid reduction of (S)-2-acetolactate (S2AL) to yield (R)-2,3-dihydroxy-isovalerate. In the isomerase reaction, S2AL is rearranged via a Mg-dependent methyl migration to produce 3-hydroxy-3-methyl-2-ketobutyrate (HMKB). In the reductase reaction, this 2-ketoacid undergoes a metal-dependent reduction by NADPH to yield (R)-2,3-dihydroxy-isovalerate. The protein is Ketol-acid reductoisomerase (NADP(+)) of Shigella flexneri.